Reading from the N-terminus, the 624-residue chain is Heat shock factor protein 5 (624 aa).

The DNA-binding element occupies Asn11–Leu228. 5 disordered regions span residues Leu52–Gly77, Gly112–His138, Ser186–Val214, Cys429–Leu461, and Gly572–Leu605. 2 stretches are compositionally biased toward gly residues: residues Gly58–Gly77 and Gly112–Gly127. Low complexity-rich tracts occupy residues Ser186 to Gln197 and Pro442 to Gln457. Phosphoserine is present on Ser600.

Belongs to the HSF family. In terms of assembly, homooligomer. Highly expressed in testis particularly in spermatocytes (at protein level). Not expressed in fetal testis and ovary.

The protein localises to the nucleus. The protein resides in the chromosome. Its function is as follows. DNA-binding transcription factor that is essential for male fertility, spermatogenesis and meiotic prophase progression in spermatocytes under non-stress conditions. Positvely and negatively regulates gene expression to ensure progression of meiotic prophase beyond pachytene stage in spermatocytes. Plays a role in male germline meiotic sex chromosome remodeling and silencing through regulation of SMARCA4. In Mus musculus (Mouse), this protein is Heat shock factor protein 5 (Hsf5).